The following is a 426-amino-acid chain: Serine--tRNA ligase (426 aa).

229–231 serves as a coordination point for L-serine; that stretch reads TAE. Residues 260 to 262 and V276 contribute to the ATP site; that span reads RKE. E283 lines the L-serine pocket. 349–352 is a binding site for ATP; that stretch reads EVTS. T384 is an L-serine binding site.

It belongs to the class-II aminoacyl-tRNA synthetase family. Type-1 seryl-tRNA synthetase subfamily. Homodimer. The tRNA molecule binds across the dimer.

The protein resides in the cytoplasm. The catalysed reaction is tRNA(Ser) + L-serine + ATP = L-seryl-tRNA(Ser) + AMP + diphosphate + H(+). It catalyses the reaction tRNA(Sec) + L-serine + ATP = L-seryl-tRNA(Sec) + AMP + diphosphate + H(+). It participates in aminoacyl-tRNA biosynthesis; selenocysteinyl-tRNA(Sec) biosynthesis; L-seryl-tRNA(Sec) from L-serine and tRNA(Sec): step 1/1. In terms of biological role, catalyzes the attachment of serine to tRNA(Ser). Is also able to aminoacylate tRNA(Sec) with serine, to form the misacylated tRNA L-seryl-tRNA(Sec), which will be further converted into selenocysteinyl-tRNA(Sec). The chain is Serine--tRNA ligase from Treponema pallidum (strain Nichols).